Consider the following 261-residue polypeptide: MAHQAHAYHMVDPSPWPLTGAIAALLLTSGTAVWFHFHSLTLLTMGNILLLLTMYQWWRDIIREGTFQGHHTPPVQKGLRYGMILFITSEVFFFLGFFWAFYHSSLSPTPELGGCWPPTGIITLDPFEVPLLNTAVLLASGVTVTWAHHSIMEGERKQTIQALTLTILLGFYFTFLQGMEYYEAPFTIADGVYGSTFFVATGFHGLHVIIGSTFLAICLLRQIQYHFTSEHHFGFEAAAWYWHFVDVVWLFLYVSIYWWGS.

The Mitochondrial matrix portion of the chain corresponds to 1–15 (MAHQAHAYHMVDPSP). Residues 16 to 34 (WPLTGAIAALLLTSGTAVW) traverse the membrane as a helical segment. The Mitochondrial intermembrane portion of the chain corresponds to 35–40 (FHFHSL). The chain crosses the membrane as a helical span at residues 41–66 (TLLTMGNILLLLTMYQWWRDIIREGT). Topologically, residues 67–72 (FQGHHT) are mitochondrial matrix. Residues 73–105 (PPVQKGLRYGMILFITSEVFFFLGFFWAFYHSS) traverse the membrane as a helical segment. Residues 106 to 128 (LSPTPELGGCWPPTGIITLDPFE) are Mitochondrial intermembrane-facing. A helical membrane pass occupies residues 129-152 (VPLLNTAVLLASGVTVTWAHHSIM). The Mitochondrial matrix segment spans residues 153–155 (EGE). A helical transmembrane segment spans residues 156 to 183 (RKQTIQALTLTILLGFYFTFLQGMEYYE). Residues 184-190 (APFTIAD) are Mitochondrial intermembrane-facing. Residues 191-223 (GVYGSTFFVATGFHGLHVIIGSTFLAICLLRQI) form a helical membrane-spanning segment. Topologically, residues 224-232 (QYHFTSEHH) are mitochondrial matrix. A helical membrane pass occupies residues 233-256 (FGFEAAAWYWHFVDVVWLFLYVSI). Topologically, residues 257-261 (YWWGS) are mitochondrial intermembrane.

This sequence belongs to the cytochrome c oxidase subunit 3 family. In terms of assembly, component of the cytochrome c oxidase (complex IV, CIV), a multisubunit enzyme composed of 14 subunits. The complex is composed of a catalytic core of 3 subunits MT-CO1, MT-CO2 and MT-CO3, encoded in the mitochondrial DNA, and 11 supernumerary subunits COX4I, COX5A, COX5B, COX6A, COX6B, COX6C, COX7A, COX7B, COX7C, COX8 and NDUFA4, which are encoded in the nuclear genome. The complex exists as a monomer or a dimer and forms supercomplexes (SCs) in the inner mitochondrial membrane with NADH-ubiquinone oxidoreductase (complex I, CI) and ubiquinol-cytochrome c oxidoreductase (cytochrome b-c1 complex, complex III, CIII), resulting in different assemblies (supercomplex SCI(1)III(2)IV(1) and megacomplex MCI(2)III(2)IV(2)).

The protein localises to the mitochondrion inner membrane. It catalyses the reaction 4 Fe(II)-[cytochrome c] + O2 + 8 H(+)(in) = 4 Fe(III)-[cytochrome c] + 2 H2O + 4 H(+)(out). Its function is as follows. Component of the cytochrome c oxidase, the last enzyme in the mitochondrial electron transport chain which drives oxidative phosphorylation. The respiratory chain contains 3 multisubunit complexes succinate dehydrogenase (complex II, CII), ubiquinol-cytochrome c oxidoreductase (cytochrome b-c1 complex, complex III, CIII) and cytochrome c oxidase (complex IV, CIV), that cooperate to transfer electrons derived from NADH and succinate to molecular oxygen, creating an electrochemical gradient over the inner membrane that drives transmembrane transport and the ATP synthase. Cytochrome c oxidase is the component of the respiratory chain that catalyzes the reduction of oxygen to water. Electrons originating from reduced cytochrome c in the intermembrane space (IMS) are transferred via the dinuclear copper A center (CU(A)) of subunit 2 and heme A of subunit 1 to the active site in subunit 1, a binuclear center (BNC) formed by heme A3 and copper B (CU(B)). The BNC reduces molecular oxygen to 2 water molecules using 4 electrons from cytochrome c in the IMS and 4 protons from the mitochondrial matrix. The sequence is that of Cytochrome c oxidase subunit 3 (mt-co3) from Salmo salar (Atlantic salmon).